We begin with the raw amino-acid sequence, 63 residues long: SPbeta prophage-derived uncharacterized protein YotC (63 aa).

The sequence is that of SPbeta prophage-derived uncharacterized protein YotC (yotC) from Bacillus subtilis (strain 168).